A 199-amino-acid polypeptide reads, in one-letter code: Shikimate kinase (199 aa).

12–17 (GAGKST) is a binding site for ATP. Ser16 contributes to the Mg(2+) binding site. Substrate-binding residues include Asp34, Arg58, and Gly80. Arg117 serves as a coordination point for ATP. Residue Arg136 coordinates substrate. A disordered region spans residues 174–199 (VSGGDRKSSEAERSGAPLRKSSEVVK). Residues 177 to 186 (GDRKSSEAER) are compositionally biased toward basic and acidic residues.

The protein belongs to the shikimate kinase family. In terms of assembly, monomer. The cofactor is Mg(2+).

The protein localises to the cytoplasm. The catalysed reaction is shikimate + ATP = 3-phosphoshikimate + ADP + H(+). It functions in the pathway metabolic intermediate biosynthesis; chorismate biosynthesis; chorismate from D-erythrose 4-phosphate and phosphoenolpyruvate: step 5/7. Functionally, catalyzes the specific phosphorylation of the 3-hydroxyl group of shikimic acid using ATP as a cosubstrate. In Mycobacterium leprae (strain TN), this protein is Shikimate kinase.